The primary structure comprises 170 residues: TFIIB-type zinc finger protein (170 aa).

The segment at Met1–Asp30 adopts a TFIIB-type zinc-finger fold. 4 residues coordinate Zn(2+): Cys3, Cys6, Cys22, and Cys25.

Belongs to the TFIIB family. Requires Zn(2+) as cofactor.

The chain is TFIIB-type zinc finger protein from Saccharolobus shibatae (strain ATCC 51178 / DSM 5389 / JCM 8931 / NBRC 15437 / B12) (Sulfolobus shibatae).